A 481-amino-acid chain; its full sequence is Cobyric acid synthase (481 aa).

The 188-residue stretch at 248 to 435 (ALTVAWLAFS…LHGMFGSDRF (188 aa)) folds into the GATase cobBQ-type domain. Residue cysteine 330 is the Nucleophile of the active site. Residue histidine 427 is part of the active site.

Belongs to the CobB/CobQ family. CobQ subfamily.

It functions in the pathway cofactor biosynthesis; adenosylcobalamin biosynthesis. In terms of biological role, catalyzes amidations at positions B, D, E, and G on adenosylcobyrinic A,C-diamide. NH(2) groups are provided by glutamine, and one molecule of ATP is hydrogenolyzed for each amidation. In Cereibacter sphaeroides (strain ATCC 17025 / ATH 2.4.3) (Rhodobacter sphaeroides), this protein is Cobyric acid synthase.